Consider the following 324-residue polypeptide: Bacilliredoxin reductase Bdr (324 aa).

Cysteine 220 bears the S-bacillithiol cysteine disulfide mark.

Interacts with BrxC. FAD is required as a cofactor. Post-translationally, C-terminal Cys can react with bacillithiol (BSH) to form mixed disulfides. S-bacillithiolation protects Cys residues against overoxidation by acting as a redox switch in response to oxidative stress.

S-bacillithiolation is the formation of mixed disulfide bonds between protein thiols and the general thiol reductant bacillithiol (BSH) under oxidative stress. BSH is an equivalent of glutathione (GSH) in Firmicutes. This protein is a NADPH-dependent bacilliredoxin reductase, which debacillithiolates (removes BSH) the S-bacillithiolated BrxB (BrxB-SSB), and to a lesser extent BrxC (BrxC-SSB). Involved in a redox cascade increasing the efficacy of BrxB function by reducing BrxB-SSB and thus reactivating it. Has NADPH-dependent oxidase activity under aerobic conditions producing hydrogen peroxide (H(2)O(2)). The protein is Bacilliredoxin reductase Bdr of Bacillus subtilis (strain 168).